The primary structure comprises 623 residues: Kelch-like protein diablo (623 aa).

Positions 1-54 (MGDLPGSGSTAQPRDAAVTGTGGNSTAGGGSSVGSTAVDRPPSPARLSHTSEKH) are disordered. Thr-19 is modified (phosphothreonine). Over residues 20–32 (GTGGNSTAGGGSS) the composition is skewed to gly residues. In terms of domain architecture, BTB spans 72–139 (CDVVLNVGGR…CYTAHIIVEE (68 aa)). The 103-residue stretch at 174-276 (CLGIRAFADT…SPKFLVGTVG (103 aa)) folds into the BACK domain. Kelch repeat units lie at residues 323 to 369 (VLFA…VLND), 371 to 417 (LYAV…VLDG), 418 to 464 (FLYA…VLGG), 466 to 511 (LYAI…VFNN), 513 to 558 (IYAV…VVNG), and 559 to 605 (QLYA…VMRA).

Its pathway is protein modification; protein ubiquitination. Its function is as follows. Probable substrate-specific adapter of an E3 ubiquitin-protein ligase complex which mediates the ubiquitination and subsequent proteasomal degradation of target proteins. May have a role in synapse differentiation and growth. In Drosophila melanogaster (Fruit fly), this protein is Kelch-like protein diablo.